Reading from the N-terminus, the 261-residue chain is Sulfur carrier protein FdhD (261 aa).

The Cysteine persulfide intermediate role is filled by C105. 245–250 (FIRGDR) is a Mo-bis(molybdopterin guanine dinucleotide) binding site.

Belongs to the FdhD family.

The protein localises to the cytoplasm. Its function is as follows. Required for formate dehydrogenase (FDH) activity. Acts as a sulfur carrier protein that transfers sulfur from IscS to the molybdenum cofactor prior to its insertion into FDH. The sequence is that of Sulfur carrier protein FdhD from Listeria innocua serovar 6a (strain ATCC BAA-680 / CLIP 11262).